The following is a 721-amino-acid chain: MEGQNKSITFDGREIRLTTGLYAPQANGSVMIECGDTSLLVTATKTTKKEVADFLPLICDYEEKLYAAGRIPGGFMRREGRPPERATLISRLIDRPMRPLFPSWMRDEIQIVASCLSLDERVPADVLAVTGASIATLLGEIPFHGPMAAVRVGLIGDDFILNPSYREIEKGDLDIVVAGSPDGIVMIEAGANQLSEQDTIEAIDFGYESVTELIKSQVDLLKDLGIKQVKSSAPEEDNTLPSYLEKNCTKGIELVLKKFDQSKDERDLELEKIKVDTQAKIESLKDDNELKVLLSENDKLLSSDFKKLTKKLMRSQIINDGKRVDGRELDEVRKISASAGILPKRVHGSALFQRGLTQVLSTTTLGTPSDAQEMDDLNPSTEKTYLHHYNFPPFSVGETRPMRTPGRREIGHGALAERAIIPVLPGKETFPYVLRVVSEVLSSNGSTSMGSVCGSTLSLLDAGVPLKALVSGTAMGLIKEGKEIRILTDIQGIEDFLGDMDFKVAGTEKGITALQMDMKITGLSVSVISDAIKKARPARLHILEKMQEAIDKPQESLSPHAPRLLSFRIDPELIGTVIGPGGRTIKGITERTNTKIDIEDGGIVTIASHDGAAAEEAQKIIEGLTRKVHEGEIFTGVVTRIIPIGAFVEILPGKEGMVHISQLSEARVERVEDVVRQGDEVTVRVREIDSRGRINLTLRGVSQNSGMSYPEPTPTPVAPLN.

Positions 495 and 501 each coordinate Mg(2+). The KH domain occupies 562–621 (PRLLSFRIDPELIGTVIGPGGRTIKGITERTNTKIDIEDGGIVTIASHDGAAAEEAQKII). The region spanning 631-699 (GEIFTGVVTR…SRGRINLTLR (69 aa)) is the S1 motif domain. A disordered region spans residues 702–721 (SQNSGMSYPEPTPTPVAPLN). Residues 711–721 (EPTPTPVAPLN) show a composition bias toward pro residues.

This sequence belongs to the polyribonucleotide nucleotidyltransferase family. Mg(2+) is required as a cofactor.

The protein localises to the cytoplasm. It catalyses the reaction RNA(n+1) + phosphate = RNA(n) + a ribonucleoside 5'-diphosphate. Functionally, involved in mRNA degradation. Catalyzes the phosphorolysis of single-stranded polyribonucleotides processively in the 3'- to 5'-direction. This Prochlorococcus marinus (strain MIT 9312) protein is Polyribonucleotide nucleotidyltransferase.